The sequence spans 178 residues: Large ribosomal subunit protein uL5 (178 aa).

This sequence belongs to the universal ribosomal protein uL5 family. As to quaternary structure, part of the 50S ribosomal subunit; part of the 5S rRNA/L5/L18/L25 subcomplex. Contacts the 5S rRNA and the P site tRNA. Forms a bridge to the 30S subunit in the 70S ribosome.

Its function is as follows. This is one of the proteins that bind and probably mediate the attachment of the 5S RNA into the large ribosomal subunit, where it forms part of the central protuberance. In the 70S ribosome it contacts protein S13 of the 30S subunit (bridge B1b), connecting the 2 subunits; this bridge is implicated in subunit movement. Contacts the P site tRNA; the 5S rRNA and some of its associated proteins might help stabilize positioning of ribosome-bound tRNAs. The polypeptide is Large ribosomal subunit protein uL5 (Wigglesworthia glossinidia brevipalpis).